Here is a 208-residue protein sequence, read N- to C-terminus: Probable GTP-binding protein EngB (208 aa).

The EngB-type G domain maps to 23–205; sequence LTSEMVVLGR…RQTLLKHLLT (183 aa). GTP-binding positions include 31–38, 57–61, 84–87, 154–157, and 182–184; these read GRSNVGKS, GKTRL, DLPG, TKFD, and FNA. 2 residues coordinate Mg(2+): Ser38 and Thr59.

Belongs to the TRAFAC class TrmE-Era-EngA-EngB-Septin-like GTPase superfamily. EngB GTPase family. Mg(2+) is required as a cofactor.

In terms of biological role, necessary for normal cell division and for the maintenance of normal septation. The chain is Probable GTP-binding protein EngB from Helicobacter pylori (strain ATCC 700392 / 26695) (Campylobacter pylori).